A 270-amino-acid polypeptide reads, in one-letter code: Phosphatidylglycerol--prolipoprotein diacylglyceryl transferase (270 aa).

4 helical membrane-spanning segments follow: residues 19–39, 56–76, 92–112, and 116–136; these read FPVY…LWLA, LVLI…VIFE, QGGL…ILFA, and GVSF…GQAI. An a 1,2-diacyl-sn-glycero-3-phospho-(1'-sn-glycerol)-binding site is contributed by R138. 3 helical membrane passes run 178-198, 206-226, and 236-256; these read HPTF…LLAL, GELF…VEGL, and LRIA…FIIV.

It belongs to the Lgt family.

It is found in the cell membrane. It carries out the reaction L-cysteinyl-[prolipoprotein] + a 1,2-diacyl-sn-glycero-3-phospho-(1'-sn-glycerol) = an S-1,2-diacyl-sn-glyceryl-L-cysteinyl-[prolipoprotein] + sn-glycerol 1-phosphate + H(+). It functions in the pathway protein modification; lipoprotein biosynthesis (diacylglyceryl transfer). Functionally, catalyzes the transfer of the diacylglyceryl group from phosphatidylglycerol to the sulfhydryl group of the N-terminal cysteine of a prolipoprotein, the first step in the formation of mature lipoproteins. In Bacillus anthracis (strain A0248), this protein is Phosphatidylglycerol--prolipoprotein diacylglyceryl transferase.